Reading from the N-terminus, the 191-residue chain is Protein NUCLEAR FUSION DEFECTIVE 2 (191 aa).

The signal sequence occupies residues 1–29 (MATLRFTLLLLVFVVGIFFSFSSVSHVRA). One can recognise an RNase III domain in the interval 48-167 (LAKLQTQIGY…IFGAIAIDAG (120 aa)).

Its function is as follows. Required for karyogamy during female gametophyte development, when the two polar nuclei fuse to form the diploid central cell nucleus. In Arabidopsis thaliana (Mouse-ear cress), this protein is Protein NUCLEAR FUSION DEFECTIVE 2.